Here is a 568-residue protein sequence, read N- to C-terminus: MSKISTKLKALSAVLSVTTLVAGCSTLPQNTDPQVLRSFSGSQSTQEIAGPTPNQDPDLLIRGFFSAGAYPTQQYEAAKAYLTEGTRSTWNPAASTRILDRIDLNTLPGSTNAERTIAIRGTQVGTLLSGGVYQPENAEFEAEITMRREDGEWRIDALPDGILLERNDLRNHYTPHDVYFFDPSGQVLVGDRRWLFNESQSMSTVLMALLVNGPSPAISPGVVNQLSTDASFVGFNDGEYQFTGLGNLDDDARLRFAAQAVWTLAHADVAGPYTLVADGAPLLSEFPTLTTDDLAEYNPEAYTNTVSTLFALQDGSLSRVSSGNVSPLQGIWSGGDIDSAAISSSANVVAAVRHESNEAVLTVGSMEGVTSDVLRSETITRPTFEYASSGLWAVVDGETPVRVARSATTGELVQTEAEIVLPRDVTGPISEFQLSRTGVRAAMIIEGKVYVGVVTRPGPGERRVTNITEVAPSLGEAALSINWRPDGILLVGTSIPETPLWRVEQDGSAISSTPSGNLSAPVVAVASSATTIYVTDSHAMLQLPTADNDIWREVPGLLGTRAAPVVAY.

A signal peptide spans 1–23; it reads MSKISTKLKALSAVLSVTTLVAG. The N-palmitoyl cysteine moiety is linked to residue cysteine 24. A lipid anchor (S-diacylglycerol cysteine) is attached at cysteine 24.

It belongs to the LpqB lipoprotein family.

It localises to the cell membrane. This Corynebacterium glutamicum (strain R) protein is Lipoprotein LpqB.